A 246-amino-acid chain; its full sequence is MASLSRPSLPSCLCSFLLLLLQVSSSYAGQFRVIGPRHPIRALVGDEVELPCRISPGKNATGMEVGWYRPPFSRVVHLYRNGKDQDGEQAPEYRGRTELLKDAIGEGKVTLRIRNVRFSDEGGFTCFFRDHSYQEEAAMELKVEDPFYWVSPGVLVLLAVLPVLLLQIAVGLVFLCLQYRLRGKLRAEIENLHRTFDPHFLRVPCWKITLFVIVPVLGPLVALIICYNWLHRRLAGQFLEELRNPF.

A signal peptide spans 1 to 28 (MASLSRPSLPSCLCSFLLLLLQVSSSYA). The Extracellular portion of the chain corresponds to 29-153 (GQFRVIGPRH…EDPFYWVSPG (125 aa)). Positions 30–144 (QFRVIGPRHP…EEAAMELKVE (115 aa)) constitute an Ig-like V-type domain. A disulfide bridge connects residues cysteine 52 and cysteine 126. Asparagine 59 carries an N-linked (GlcNAc...) asparagine glycan. The chain crosses the membrane as a helical span at residues 154–174 (VLVLLAVLPVLLLQIAVGLVF). Residues 175-209 (LCLQYRLRGKLRAEIENLHRTFDPHFLRVPCWKIT) lie on the Cytoplasmic side of the membrane. A helical membrane pass occupies residues 210-230 (LFVIVPVLGPLVALIICYNWL). Residues 231–246 (HRRLAGQFLEELRNPF) are Extracellular-facing.

This sequence belongs to the immunoglobulin superfamily. BTN/MOG family. Homodimer.

The protein localises to the membrane. Its function is as follows. Minor component of the myelin sheath. May be involved in completion and/or maintenance of the myelin sheath and in cell-cell communication. Mediates homophilic cell-cell adhesion. The polypeptide is Myelin-oligodendrocyte glycoprotein (MOG) (Pongo abelii (Sumatran orangutan)).